The following is a 278-amino-acid chain: Probable septum site-determining protein MinC (278 aa).

The protein belongs to the MinC family. Interacts with MinD and FtsZ.

In terms of biological role, cell division inhibitor that blocks the formation of polar Z ring septums. Rapidly oscillates between the poles of the cell to destabilize FtsZ filaments that have formed before they mature into polar Z rings. Prevents FtsZ polymerization. This Gloeobacter violaceus (strain ATCC 29082 / PCC 7421) protein is Probable septum site-determining protein MinC.